A 561-amino-acid polypeptide reads, in one-letter code: Potassium-transporting ATPase potassium-binding subunit (561 aa).

11 helical membrane-spanning segments follow: residues 5–25 (IELFTMIAIIVLLTKPLGTYM), 63–83 (KYALTFLLVNMVMMIITYFIL), 103–122 (LAFNTVISFMTNTNLQHYAG), 133–153 (IVIVFLMFTSAASGLVTAAAI), 179–199 (LLPISMLATLILVWQGVPQTF), 255–275 (IEMLLMMLLPTSLIYTYGLMI), 281–301 (ALVLYISLFVIFILLAVGAVY), 380–400 (AGLQNIIMYTILTVFLTGLMV), 418–438 (LIALAILVHPFLILFSSALTV), 485–505 (IMTGLVMFFGRYITIILMLAV), and 531–551 (AIFIAVVLIVGALTFFPAVIL).

The protein belongs to the KdpA family. As to quaternary structure, the system is composed of three essential subunits: KdpA, KdpB and KdpC.

It is found in the cell membrane. Functionally, part of the high-affinity ATP-driven potassium transport (or Kdp) system, which catalyzes the hydrolysis of ATP coupled with the electrogenic transport of potassium into the cytoplasm. This subunit binds the extracellular potassium ions and delivers the ions to the membrane domain of KdpB through an intramembrane tunnel. This chain is Potassium-transporting ATPase potassium-binding subunit, found in Caldanaerobacter subterraneus subsp. tengcongensis (strain DSM 15242 / JCM 11007 / NBRC 100824 / MB4) (Thermoanaerobacter tengcongensis).